The sequence spans 120 residues: Inner membrane protein YidG (120 aa).

The Cytoplasmic segment spans residues 1–21 (MPDSRKARRIADPGLQPERTS). A helical transmembrane segment spans residues 22–39 (LAWFRTMLGYGALMALAI). Topologically, residues 40–48 (KHNWHQAGM) are periplasmic. The helical transmembrane segment at 49–68 (LFWISIGILAIVALILWHYT) threads the bilayer. Residues 69–90 (RNRNLMDVTNSDFSQFHVVRDK) are Cytoplasmic-facing. The chain crosses the membrane as a helical span at residues 91–113 (FLISLAVLSLAILFAVTHIHQLI). At 114–120 (VFIERVA) the chain is on the periplasmic side.

It localises to the cell inner membrane. This is Inner membrane protein YidG (yidG) from Escherichia coli O157:H7.